The primary structure comprises 643 residues: Threonine--tRNA ligase (643 aa).

Positions 1–61 constitute a TGS domain; the sequence is MIKITLKDGS…NEDSSLEICT (61 aa). Positions 240 to 540 are catalytic; it reads DHNKLGRELG…LIEKYAGALP (301 aa). The Zn(2+) site is built by Cys-335, His-386, and His-517.

The protein belongs to the class-II aminoacyl-tRNA synthetase family. Homodimer. Zn(2+) serves as cofactor.

It is found in the cytoplasm. The catalysed reaction is tRNA(Thr) + L-threonine + ATP = L-threonyl-tRNA(Thr) + AMP + diphosphate + H(+). Functionally, catalyzes the attachment of threonine to tRNA(Thr) in a two-step reaction: L-threonine is first activated by ATP to form Thr-AMP and then transferred to the acceptor end of tRNA(Thr). Also edits incorrectly charged L-seryl-tRNA(Thr). This Clostridium perfringens (strain ATCC 13124 / DSM 756 / JCM 1290 / NCIMB 6125 / NCTC 8237 / Type A) protein is Threonine--tRNA ligase.